The chain runs to 870 residues: Leucine--tRNA ligase (870 aa).

A 'HIGH' region motif is present at residues 43-53 (PYPSGRIHMGH). Positions 630-634 (KMSKS) match the 'KMSKS' region motif. Lysine 633 contacts ATP.

The protein belongs to the class-I aminoacyl-tRNA synthetase family.

It localises to the cytoplasm. It catalyses the reaction tRNA(Leu) + L-leucine + ATP = L-leucyl-tRNA(Leu) + AMP + diphosphate. This chain is Leucine--tRNA ligase, found in Parvibaculum lavamentivorans (strain DS-1 / DSM 13023 / NCIMB 13966).